Consider the following 617-residue polypeptide: MAASETVLRVPLGSVSQSCYLASFFVNSTPNLSFKPVSRNRKTVRCTNSHEVSSVPKHSFHSSNSVLKGKKFVSTICKCQKHDVEESIRSTLLPSDGLSSELKSDLDEMPLPVNGSVSSNGNAQSVGTKSIEDEAWDLLRQSVVFYCGSPIGTIAANDPNSTSVLNYDQVFIRDFIPSGIAFLLKGEYDIVRNFILYTLQLQSWEKTMDCHSPGQGLMPCSFKVKTVPLDGDDSMTEEVLDPDFGEAAIGRVAPVDSGLWWIILLRAYGKCTGDLSVQERVDVQTGIKMILKLCLADGFDMFPTLLVTDGSCMIDRRMGIHGHPLEIQALFYSALVCAREMLTPEDGSADLIRALNNRLVALNFHIREYYWLDLKKINEIYRYQTEEYSYDAVNKFNIYPDQIPSWLVDFMPNRGGYLIGNLQPAHMDFRFFTLGNLWSIVSSLASNDQSHAILDFIEAKWAELVADMPLKICYPAMEGEEWRIITGSDPKNTPWSYHNGGAWPTLLWQLTVASIKMGRPEIAEKAVELAERRISLDKWPEYYDTKRARFIGKQARLYQTWSIAGYLVAKLLLANPAAAKFLTSEEDSDLRNAFSCMLSANPRRTRGPKKAQQPFIV.

Residues 1-45 (MAASETVLRVPLGSVSQSCYLASFFVNSTPNLSFKPVSRNRKTVR) constitute a chloroplast transit peptide. Serine 87 is subject to Phosphoserine.

It belongs to the glycosyl hydrolase 100 family. Expressed in roots, leaves and flowers.

It localises to the plastid. The protein localises to the chloroplast. The catalysed reaction is Hydrolysis of terminal non-reducing beta-D-fructofuranoside residues in beta-D-fructofuranosides.. Functionally, chloroplastic invertase that cleaves sucrose into glucose and fructose and is associated with the development of the photosynthetic apparatus and the assimilation of nitrogen in seedlings to control the sucrose to hexose ratio. Participates in the carbon flux between the cytosol and plastids in leaves. This is Alkaline/neutral invertase E, chloroplastic from Arabidopsis thaliana (Mouse-ear cress).